The primary structure comprises 82 residues: Small ribosomal subunit protein bS18 (82 aa).

Belongs to the bacterial ribosomal protein bS18 family. In terms of assembly, part of the 30S ribosomal subunit. Forms a tight heterodimer with protein bS6.

In terms of biological role, binds as a heterodimer with protein bS6 to the central domain of the 16S rRNA, where it helps stabilize the platform of the 30S subunit. In Bifidobacterium adolescentis (strain ATCC 15703 / DSM 20083 / NCTC 11814 / E194a), this protein is Small ribosomal subunit protein bS18.